Here is a 432-residue protein sequence, read N- to C-terminus: Adenylosuccinate synthetase 2 (432 aa).

GTP contacts are provided by residues G12–R18 and G40–T42. The active-site Proton acceptor is the D13. Mg(2+) is bound by residues D13 and G40. Residues D13–K16, N38–H41, T128, R142, Q222, T237, and R301 each bind IMP. H41 functions as the Proton donor in the catalytic mechanism. V297–R303 serves as a coordination point for substrate. GTP is bound by residues R303, K329–D331, and T411–G413.

It belongs to the adenylosuccinate synthetase family. As to quaternary structure, homodimer. Requires Mg(2+) as cofactor.

It is found in the cytoplasm. The enzyme catalyses IMP + L-aspartate + GTP = N(6)-(1,2-dicarboxyethyl)-AMP + GDP + phosphate + 2 H(+). It functions in the pathway purine metabolism; AMP biosynthesis via de novo pathway; AMP from IMP: step 1/2. Its function is as follows. Plays an important role in the de novo pathway of purine nucleotide biosynthesis. Catalyzes the first committed step in the biosynthesis of AMP from IMP. The chain is Adenylosuccinate synthetase 2 from Burkholderia lata (strain ATCC 17760 / DSM 23089 / LMG 22485 / NCIMB 9086 / R18194 / 383).